A 145-amino-acid polypeptide reads, in one-letter code: Natriuretic peptides A (145 aa).

Positions 1 to 23 (MGTSFVGYLTFVLLLLALTKVRG) are cleaved as a signal peptide. The propeptide occupies 24 to 117 (GPAYNSPLSS…KLRELLNAPR (94 aa)). Cys-125 and Cys-141 form a disulfide bridge.

The protein belongs to the natriuretic peptide family. In terms of processing, cleaved upon secretion to produce the functional hormone.

Its subcellular location is the secreted. Hormone playing a key role in cardiovascular homeostasis through regulation of natriuresis, diuresis, and vasodilation. Has a cGMP-stimulating activity. The protein is Natriuretic peptides A of Aquarana catesbeiana (American bullfrog).